The primary structure comprises 329 residues: Mas-related G-protein coupled receptor member X2 (329 aa).

Over 1-33 (MDPTTPAWGTESTTMNGNDQALPLFCGKETLIS) the chain is Extracellular. A helical transmembrane segment spans residues 34–54 (VFLILFIALVGLVGNGFVLWL). Residues 55-63 (LGFRMRKNA) lie on the Cytoplasmic side of the membrane. A helical membrane pass occupies residues 64-84 (FSVYVLSLAGADFLFLCFQII). Residues 85–96 (NCLVYLSNVFCS) lie on the Extracellular side of the membrane. The helical transmembrane segment at 97–117 (ISINFPSFFITVMTCAYLAGL) threads the bilayer. The Cytoplasmic portion of the chain corresponds to 118–144 (SMLSTISTERCLSVLWPIWYRCRRPRH). The chain crosses the membrane as a helical span at residues 145-165 (LSAVACVLLWALSLLLSILEG). Residues 166-183 (KFCGLFGDGDSGWCQTFD) lie on the Extracellular side of the membrane. Residues 184–204 (LITAAWLIFLFMVLCGSSLAL) form a helical membrane-spanning segment. The Cytoplasmic portion of the chain corresponds to 205 to 227 (LVRILCGSRGLPLTRLYLTILLT). Residues 228-248 (VLVFLLCGLPFGIQWFLILWI) form a helical membrane-spanning segment. At 249–263 (WKNSDVLFCHIHPVS) the chain is on the extracellular side. The helical transmembrane segment at 264–284 (VVLSSLNSSANPIIYFFVGSF) threads the bilayer. Topologically, residues 285–329 (RKQWRLQQPILKLALQRALQDIAEVDHSEGCFRQGTPEMSRSSLV) are cytoplasmic.

It belongs to the G-protein coupled receptor 1 family. Mas subfamily.

The protein resides in the cell membrane. In terms of biological role, mast cell-specific receptor for basic secretagogues, i.e. cationic amphiphilic drugs, as well as endo- or exogenous peptides, consisting of a basic head group and a hydrophobic core. Recognizes and binds small molecules containing a cyclized tetrahydroisoquinoline (THIQ), such as non-steroidal neuromuscular blocking drugs (NMBDs), including tubocurarine and atracurium. In response to these compounds, mediates pseudo-allergic reactions characterized by histamine release, inflammation and airway contraction. In Pan troglodytes (Chimpanzee), this protein is Mas-related G-protein coupled receptor member X2 (MRGPRX2).